The following is a 157-amino-acid chain: 3-dehydroquinate dehydratase (157 aa).

Residue Y24 is the Proton acceptor of the active site. Residues N75, H81, and D88 each coordinate substrate. The active-site Proton donor is the H101. Substrate is bound by residues 102-103 (LS) and R112.

The protein belongs to the type-II 3-dehydroquinase family. Homododecamer.

It catalyses the reaction 3-dehydroquinate = 3-dehydroshikimate + H2O. Its pathway is metabolic intermediate biosynthesis; chorismate biosynthesis; chorismate from D-erythrose 4-phosphate and phosphoenolpyruvate: step 3/7. Functionally, catalyzes a trans-dehydration via an enolate intermediate. The protein is 3-dehydroquinate dehydratase of Brucella canis (strain ATCC 23365 / NCTC 10854 / RM-666).